The chain runs to 251 residues: MIRVNSLQVDSRLLPLSLQANAGEVWHVIGPNGCGKSTLLAALAGMIPFSGSVQVDGLDVSQASLSELARHRAYLAQNNKPSFQLHVFQYLALSVPANVALECSEVASEIDQISRLLNIDDKLHRSIHQLSGGEWQRVRLAGSCLQVSPVLNPSARLLIWDEPAAPLDIAQESLLYRLIERMAGQGLTVIMANHDLNRTLRHADQVLLLSRGVLYRAGSAKEVLTQEVLQSVFGTSIRRVELEGHPHLLFD.

Residues 2 to 236 (IRVNSLQVDS…EVLQSVFGTS (235 aa)) form the ABC transporter domain. Position 30-37 (30-37 (GPNGCGKS)) interacts with ATP.

This sequence belongs to the ABC transporter superfamily. Vitamin B12 importer (TC 3.A.1.13.1) family. In terms of assembly, the complex is composed of two ATP-binding proteins (BtuD), two transmembrane proteins (BtuC) and a solute-binding protein (BtuF).

It is found in the cell inner membrane. It carries out the reaction an R-cob(III)alamin(out) + ATP + H2O = an R-cob(III)alamin(in) + ADP + phosphate + H(+). Part of the ABC transporter complex BtuCDF involved in vitamin B12 import. Responsible for energy coupling to the transport system. The polypeptide is Vitamin B12 import ATP-binding protein BtuD (Vibrio cholerae serotype O1 (strain ATCC 39315 / El Tor Inaba N16961)).